The sequence spans 1938 residues: Myosin-6 (1938 aa).

Positions 31-80 (DIRTECFVPDDKEEYVKAKIVSREGGKVTAETENGKTVTVKEDQVMQQNP) constitute a Myosin N-terminal SH3-like domain. A Myosin motor domain is found at 84–779 (DKIEDMAMLT…LLGLLEEMRD (696 aa)). Position 128 is an N6,N6,N6-trimethyllysine (K128). 177 to 184 (GESGAGKT) contacts ATP. A Phosphothreonine modification is found at T378. A Phosphoserine modification is found at S416. Actin-binding stretches follow at residues 656-678 (LNKLMTNLRTTHPHFVRCIIPNE) and 758-772 (KFGHTKVFFKAGLLG). Positions 782 to 811 (LSRIITRIQAQARGQLMRIEFKKMVERRDA) constitute an IQ domain. Calmodulin-binding stretches follow at residues 789 to 806 (IQAQARGQLMRIEFKKMV) and 815 to 832 (IQWNIRAFMGVKNWPWMK). A coiled-coil region spans residues 842–1938 (KSAETEKEMA…GAKQKMHDEE (1097 aa)). 2 positions are modified to phosphoserine: S1089 and S1138. Position 1260 is a phosphotyrosine (Y1260). Residue S1270 is modified to Phosphoserine. Phosphothreonine occurs at positions 1276 and 1283. Residue S1308 is modified to Phosphoserine. At Y1309 the chain carries Phosphotyrosine. T1310 is modified (phosphothreonine). S1511 is subject to Phosphoserine. T1514 and T1680 each carry phosphothreonine. Residues 1907–1938 (AEERADIAESQVNKLRAKSRDIGAKQKMHDEE) form a disordered region. Residues 1924-1938 (KSRDIGAKQKMHDEE) show a composition bias toward basic and acidic residues.

This sequence belongs to the TRAFAC class myosin-kinesin ATPase superfamily. Myosin family. In terms of assembly, muscle myosin is a hexameric protein that consists of 2 heavy chain subunits (MHC), 2 alkali light chain subunits (MLC) and 2 regulatory light chain subunits (MLC-2).

The protein localises to the cytoplasm. The protein resides in the myofibril. Functionally, muscle contraction. In Rattus norvegicus (Rat), this protein is Myosin-6 (Myh6).